A 261-amino-acid polypeptide reads, in one-letter code: 3'-5' ssDNA/RNA exonuclease TatD (261 aa).

Residues glutamate 92, histidine 128, and histidine 153 each coordinate a divalent metal cation.

It belongs to the metallo-dependent hydrolases superfamily. TatD-type hydrolase family. TatD subfamily. Monomer. It depends on Mg(2+) as a cofactor.

The protein resides in the cytoplasm. Functionally, 3'-5' exonuclease that prefers single-stranded DNA and RNA. May play a role in the H(2)O(2)-induced DNA damage repair. This is 3'-5' ssDNA/RNA exonuclease TatD from Erwinia billingiae (strain Eb661).